Here is a 219-residue protein sequence, read N- to C-terminus: Ribose-5-phosphate isomerase A (219 aa).

Residues 28–31 (TGST), 81–84 (DGAD), and 94–97 (KGGG) each bind substrate. The Proton acceptor role is filled by glutamate 103. Lysine 121 contacts substrate.

This sequence belongs to the ribose 5-phosphate isomerase family. In terms of assembly, homodimer.

The catalysed reaction is aldehydo-D-ribose 5-phosphate = D-ribulose 5-phosphate. Its pathway is carbohydrate degradation; pentose phosphate pathway; D-ribose 5-phosphate from D-ribulose 5-phosphate (non-oxidative stage): step 1/1. Catalyzes the reversible conversion of ribose-5-phosphate to ribulose 5-phosphate. The sequence is that of Ribose-5-phosphate isomerase A from Shewanella pealeana (strain ATCC 700345 / ANG-SQ1).